A 160-amino-acid polypeptide reads, in one-letter code: uncharacterized protein (160 aa).

Residues 1–29 (MTGKTHIMGGIASCTAAAYYYGFDPVLMA) form the signal peptide. The next 2 membrane-spanning stretches (helical) occupy residues 67–87 (TFTH…TYIP) and 137–157 (QLVL…LFHG).

It to E.coli YdjM.

It is found in the cell membrane. This is an uncharacterized protein from Bacillus subtilis (strain 168).